A 352-amino-acid chain; its full sequence is Selenide, water dikinase (352 aa).

Residue cysteine 23 is part of the active site. Residues lysine 26 and 54–56 (SRD) each bind ATP. A Mg(2+)-binding site is contributed by aspartate 57. ATP is bound by residues aspartate 74, aspartate 97, and 145-147 (GHS). Aspartate 97 contributes to the Mg(2+) binding site. A Mg(2+)-binding site is contributed by aspartate 233.

Belongs to the selenophosphate synthase 1 family. Class I subfamily. Homodimer. Requires Mg(2+) as cofactor.

The catalysed reaction is hydrogenselenide + ATP + H2O = selenophosphate + AMP + phosphate + 2 H(+). Its function is as follows. Synthesizes selenophosphate from selenide and ATP. The chain is Selenide, water dikinase from Shewanella sp. (strain ANA-3).